Reading from the N-terminus, the 93-residue chain is Early E3A 10.5 kDa glycoprotein (93 aa).

N3 carries an N-linked (GlcNAc...) asparagine; by host glycan. A helical membrane pass occupies residues M34–L55.

It belongs to the adenoviridae E3A-1 family. N-glycosylated and probably also O-glycosylated.

It is found in the host nucleus membrane. This is Early E3A 10.5 kDa glycoprotein from Homo sapiens (Human).